Reading from the N-terminus, the 434-residue chain is MKRVYSKIESIAGNVITVTAQGIKYGELAIVKAKDTSSLAEVIKLDREKVSLQVYGGTRGVSTSDEIKFLGHSMQVSFSDNLLGRIFDGSGNPRDGGPSLDDNLIEIGGPSANPTKRIVPRNMIRTGLPMIDVFNTLVESQKLPIFSVSGEPYNELLIRIALQAEVDLIILGGMGLKHDDYLTFKDSLEKGGALSRAIFFVHTANDSVVESLTVPDISLSVAEKFALKGKKVLVLLTDMTNFADAMKEISITMEQVPSNRGYPGDLYSQLAYRYEKAIDFEGAGSITILAVTTMPGDDVTHPVPDNTGYITEGQYYLKGGRIEPFGSLSRLKQMVNSRTRDDHRTIMDSMIKLYASSKESVEKKAMGFNMTKWDEKLLKYSNMFESKMMDLSVNIPLEEALDLGWSILASCFSPKETGIKTDLIEKYWPKKETY.

This sequence belongs to the ATPase alpha/beta chains family.

Its function is as follows. Produces ATP from ADP in the presence of a proton gradient across the membrane. The V-type beta chain is a regulatory subunit. The sequence is that of V-type ATP synthase beta chain (atpB) from Borreliella burgdorferi (strain ATCC 35210 / DSM 4680 / CIP 102532 / B31) (Borrelia burgdorferi).